Here is a 375-residue protein sequence, read N- to C-terminus: Putative disease resistance protein At3g15700 (375 aa).

Residues 17-49 adopt a coiled-coil conformation; it reads KENDNVKKLKTATEELKDLRNIVMKRVKMYEDQ. The NB-ARC domain occupies 158 to 372; it reads DNTGIIGLYG…LSTSPPNFSG (215 aa). 167-174 contributes to the ATP binding site; that stretch reads GVEGVGKT.

In terms of biological role, potential disease resistance protein. The chain is Putative disease resistance protein At3g15700 from Arabidopsis thaliana (Mouse-ear cress).